Here is a 270-residue protein sequence, read N- to C-terminus: Glutamate racemase (270 aa).

Substrate contacts are provided by residues 13 to 14 (DS) and 45 to 46 (YG). The Proton donor/acceptor role is filled by C77. Substrate is bound at residue 78-79 (NT). The active-site Proton donor/acceptor is the C185. 186–187 (TH) is a substrate binding site.

Belongs to the aspartate/glutamate racemases family.

The enzyme catalyses L-glutamate = D-glutamate. The protein operates within cell wall biogenesis; peptidoglycan biosynthesis. Provides the (R)-glutamate required for cell wall biosynthesis. The protein is Glutamate racemase of Vibrio parahaemolyticus serotype O3:K6 (strain RIMD 2210633).